The primary structure comprises 37 residues: Cytochrome b6-f complex subunit 5 (37 aa).

The helical transmembrane segment at 5 to 25 threads the bilayer; the sequence is LLSGIVLGLIVVTLSGLFYAA.

The protein belongs to the PetG family. In terms of assembly, the 4 large subunits of the cytochrome b6-f complex are cytochrome b6, subunit IV (17 kDa polypeptide, PetD), cytochrome f and the Rieske protein, while the 4 small subunits are PetG, PetL, PetM and PetN. The complex functions as a dimer.

It is found in the cellular thylakoid membrane. Component of the cytochrome b6-f complex, which mediates electron transfer between photosystem II (PSII) and photosystem I (PSI), cyclic electron flow around PSI, and state transitions. PetG is required for either the stability or assembly of the cytochrome b6-f complex. In Trichormus variabilis (strain ATCC 29413 / PCC 7937) (Anabaena variabilis), this protein is Cytochrome b6-f complex subunit 5.